The following is a 461-amino-acid chain: Cysteine--tRNA ligase (461 aa).

C28 is a Zn(2+) binding site. The 'HIGH' region motif lies at 30 to 40 (ITVYDLCHIGH). Zn(2+) is bound by residues C209, H234, and E238. The short motif at 266 to 270 (KMSKS) is the 'KMSKS' region element. K269 is an ATP binding site.

It belongs to the class-I aminoacyl-tRNA synthetase family. In terms of assembly, monomer. Requires Zn(2+) as cofactor.

The protein localises to the cytoplasm. The catalysed reaction is tRNA(Cys) + L-cysteine + ATP = L-cysteinyl-tRNA(Cys) + AMP + diphosphate. The protein is Cysteine--tRNA ligase of Salmonella agona (strain SL483).